The primary structure comprises 481 residues: Betaine aldehyde dehydrogenase 2 (481 aa).

K(+) contacts are provided by serine 29 and aspartate 96. 152–154 (GAW) serves as a coordination point for NAD(+). Lysine 164 functions as the Charge relay system in the catalytic mechanism. 178–181 (KPSE) lines the NAD(+) pocket. Valine 182 contacts K(+). 231–234 (SVKT) is an NAD(+) binding site. Residue isoleucine 246 participates in K(+) binding. Glutamate 252 serves as the catalytic Proton acceptor. Residues glycine 254, cysteine 286, and glutamate 383 each contribute to the NAD(+) site. The active-site Nucleophile is cysteine 286. Cysteine 286 is modified (cysteine sulfenic acid (-SOH)). 2 residues coordinate K(+): lysine 453 and glycine 456. The active-site Charge relay system is glutamate 460.

Belongs to the aldehyde dehydrogenase family. Dimer of dimers. K(+) serves as cofactor.

It catalyses the reaction betaine aldehyde + NAD(+) + H2O = glycine betaine + NADH + 2 H(+). Its pathway is amine and polyamine biosynthesis; betaine biosynthesis via choline pathway; betaine from betaine aldehyde: step 1/1. Involved in the biosynthesis of the osmoprotectant glycine betaine. Catalyzes the irreversible oxidation of betaine aldehyde to the corresponding acid. The protein is Betaine aldehyde dehydrogenase 2 of Rhizobium meliloti (strain 1021) (Ensifer meliloti).